The chain runs to 429 residues: Glucose-1-phosphate adenylyltransferase (429 aa).

Alpha-D-glucose 1-phosphate contacts are provided by residues G162, 177-178 (EK), and S209.

Belongs to the bacterial/plant glucose-1-phosphate adenylyltransferase family. In terms of assembly, homotetramer.

It carries out the reaction alpha-D-glucose 1-phosphate + ATP + H(+) = ADP-alpha-D-glucose + diphosphate. It functions in the pathway glycan biosynthesis; glycogen biosynthesis. Involved in the biosynthesis of ADP-glucose, a building block required for the elongation reactions to produce glycogen. Catalyzes the reaction between ATP and alpha-D-glucose 1-phosphate (G1P) to produce pyrophosphate and ADP-Glc. The chain is Glucose-1-phosphate adenylyltransferase from Gloeothece citriformis (strain PCC 7424) (Cyanothece sp. (strain PCC 7424)).